The sequence spans 416 residues: MYRHGISSQRSWPLWTTIFIFLGVAAILGVTIGLLVHFLAVEKTYYYQGDFHISGVTYNDNCENAASQASTNLSKDIETKMLNAFQNSSIYKEYVKSEVIKLLPNANGSNVQLQLKFKFPPAEGVSMRTKIKAKLHQMLKNNMASWNAVPASIKLMEISKAASEMLTNNCCGRQVANSIITGNKIVNGKSSLEGAWPWQASMQWKGRHYCGASLISSRWLLSAAHCFAKKNNSKDWTVNFGIVVNKPYMTRKVQNIIFHENYSSPGLHDDIALVQLAEEVSFTEYIRKICLPEAKMKLSENDNVVVTGWGTLYMNGSFPVILQEDFLKIIDNKICNASYAYSGFVTDTMLCAGFMSGEADACQNDSGGPLAYPDSRNIWHLVGIVSWGDGCGKKNKPGVYTRVTSYRNWITSKTGL.

Residues 1-17 (MYRHGISSQRSWPLWTT) lie on the Cytoplasmic side of the membrane. A helical; Signal-anchor for type II membrane protein membrane pass occupies residues 18–38 (IFIFLGVAAILGVTIGLLVHF). At 39-416 (LAVEKTYYYQ…RNWITSKTGL (378 aa)) the chain is on the extracellular side. The 118-residue stretch at 43–160 (KTYYYQGDFH…ASIKLMEISK (118 aa)) folds into the SEA domain. 2 N-linked (GlcNAc...) asparagine glycosylation sites follow: N72 and N107. Residues 185-415 (IVNGKSSLEG…YRNWITSKTG (231 aa)) enclose the Peptidase S1 domain. C210 and C226 form a disulfide bridge. Catalysis depends on charge relay system residues H225 and D270. N315 carries an N-linked (GlcNAc...) asparagine glycan. Disulfide bonds link C335–C351 and C362–C391. S366 (charge relay system) is an active-site residue.

The protein belongs to the peptidase S1 family.

The protein resides in the cell membrane. With respect to regulation, inhibited by aprotinin, leupeptin, benzamidine, SERPINA1, SPINT1 and SPINT2. Serine protease. This chain is Transmembrane protease serine 11B (TMPRSS11B), found in Homo sapiens (Human).